We begin with the raw amino-acid sequence, 412 residues long: Serine/threonine transporter SstT (412 aa).

The next 10 helical transmembrane spans lie at 16-36, 44-64, 82-102, 115-135, 141-161, 179-199, 217-237, 298-318, 330-350, and 357-377; these read LVAQ…FLPG, LGDL…FVLV, IIVL…LASF, TDVI…FNIV, ALLN…GFAF, VTLI…GLVA, LLVL…LIVF, MGGA…TLGI, LLAA…LLLI, and FGIS…IGVV.

This sequence belongs to the dicarboxylate/amino acid:cation symporter (DAACS) (TC 2.A.23) family.

The protein localises to the cell inner membrane. It catalyses the reaction L-serine(in) + Na(+)(in) = L-serine(out) + Na(+)(out). The enzyme catalyses L-threonine(in) + Na(+)(in) = L-threonine(out) + Na(+)(out). In terms of biological role, involved in the import of serine and threonine into the cell, with the concomitant import of sodium (symport system). The protein is Serine/threonine transporter SstT of Stutzerimonas stutzeri (strain A1501) (Pseudomonas stutzeri).